A 363-amino-acid polypeptide reads, in one-letter code: MRVPVATKSHHYEVLLGHRFLTEAIQTYADQLNKADKFFVFTDAHVWEAQGDYFKANFPYDFEVFILPGGEACKTFEQYYAAQTFLLEQKCSRKSFVFAFGGGAVGDLTGFVAATYMRGIPFIQIPTTILAHDSAVGGKTAINHPLGKNMIGAFYQPEGVIYDTVFSETLPVREIRSGTAELIKHAMISDSAWLEELMAADSVMHFNQQELAMQLKKGIEVKAKIVAEDETEQSVRKFLNLGHTYGHAIEAAAGYGKVAHGEAVMIGLVYCLLLSERYGELNRPFTKAFLQFAVKNGYPFEAVNDYTFEQLTSYLMKDKKTEYGILQFVLLEKIGKPFVRAIDLKECKEVDAEYRELLAEVLV.

NAD(+) contacts are provided by residues 103–107, 127–128, K139, K148, and 166–169; these read GAVGD, TT, and FSET. Zn(2+) is bound by residues E181, H243, and H260.

The protein belongs to the sugar phosphate cyclases superfamily. Dehydroquinate synthase family. The cofactor is Co(2+). Requires Zn(2+) as cofactor. NAD(+) is required as a cofactor.

Its subcellular location is the cytoplasm. It carries out the reaction 7-phospho-2-dehydro-3-deoxy-D-arabino-heptonate = 3-dehydroquinate + phosphate. It participates in metabolic intermediate biosynthesis; chorismate biosynthesis; chorismate from D-erythrose 4-phosphate and phosphoenolpyruvate: step 2/7. Functionally, catalyzes the conversion of 3-deoxy-D-arabino-heptulosonate 7-phosphate (DAHP) to dehydroquinate (DHQ). This Lysinibacillus sphaericus (strain C3-41) protein is 3-dehydroquinate synthase.